A 187-amino-acid polypeptide reads, in one-letter code: Adenine phosphoribosyltransferase (187 aa).

The protein belongs to the purine/pyrimidine phosphoribosyltransferase family. In terms of assembly, homodimer.

It localises to the cytoplasm. The catalysed reaction is AMP + diphosphate = 5-phospho-alpha-D-ribose 1-diphosphate + adenine. Its pathway is purine metabolism; AMP biosynthesis via salvage pathway; AMP from adenine: step 1/1. Functionally, catalyzes a salvage reaction resulting in the formation of AMP, that is energically less costly than de novo synthesis. The sequence is that of Adenine phosphoribosyltransferase from Burkholderia pseudomallei (strain 668).